The following is a 262-amino-acid chain: Hydroxyethylthiazole kinase (262 aa).

A substrate-binding site is contributed by Met40. Residues Lys116 and Thr162 each coordinate ATP. Gly189 serves as a coordination point for substrate.

The protein belongs to the Thz kinase family. Mg(2+) is required as a cofactor.

It carries out the reaction 5-(2-hydroxyethyl)-4-methylthiazole + ATP = 4-methyl-5-(2-phosphooxyethyl)-thiazole + ADP + H(+). Its pathway is cofactor biosynthesis; thiamine diphosphate biosynthesis; 4-methyl-5-(2-phosphoethyl)-thiazole from 5-(2-hydroxyethyl)-4-methylthiazole: step 1/1. Functionally, catalyzes the phosphorylation of the hydroxyl group of 4-methyl-5-beta-hydroxyethylthiazole (THZ). This chain is Hydroxyethylthiazole kinase, found in Clostridioides difficile (strain 630) (Peptoclostridium difficile).